We begin with the raw amino-acid sequence, 325 residues long: Dimethylsulfide dehydrogenase subunit beta (325 aa).

4Fe-4S ferredoxin-type domains are found at residues 6-35 (ISMV…RNGR), 123-154 (SYYF…KRQE), and 156-185 (GIVL…FNEQ). [4Fe-4S] cluster contacts are provided by Cys-15, Cys-18, Cys-21, Cys-25, Cys-132, Cys-135, and Cys-140. Cys-144, Cys-165, and Cys-171 together coordinate [3Fe-4S] cluster. [4Fe-4S] cluster is bound by residues Cys-175, Cys-192, Cys-195, Cys-207, and Cys-211.

As to quaternary structure, heterotrimer of alpha, beta and gamma subunits. Requires [3Fe-4S] cluster as cofactor. It depends on [4Fe-4S] cluster as a cofactor.

It is found in the periplasm. Its function is as follows. Electron transfer subunit of the dehydrogenase during anaerobic growth on dimethyl sulfide. This is Dimethylsulfide dehydrogenase subunit beta (ddhB) from Rhodovulum sulfidophilum (Rhodobacter sulfidophilus).